Here is a 104-residue protein sequence, read N- to C-terminus: uncharacterized protein (104 aa).

The segment at 62 to 92 (SSPAASSHPRKRGKEKKERTPTERLAAPARK) is disordered.

This is an uncharacterized protein from Human adenovirus B serotype 7 (HAdV-7).